The primary structure comprises 765 residues: Dipeptidyl peptidase 4 (765 aa).

The Cytoplasmic portion of the chain corresponds to 1-6; the sequence is MKTPWK. A helical; Signal-anchor for type II membrane protein transmembrane segment spans residues 7-29; that stretch reads VLLGLLAIAALVTVITVPVVLLT. The Extracellular segment spans residues 30-765; it reads KGNDASTDSR…HFLKQCFSLL (736 aa). Residues Asn84, Asn91, Asn149, Asn218, Asn228, Asn271, Asn280, Asn320, and Asn392 are each glycosylated (N-linked (GlcNAc...) asparagine). Cystine bridges form between Cys384–Cys393, Cys443–Cys446, and Cys453–Cys471. An N-linked (GlcNAc...) asparagine glycan is attached at Asn495. Ser629 serves as the catalytic Charge relay system. Residues Cys648 and Cys761 are joined by a disulfide bond. N-linked (GlcNAc...) asparagine glycosylation occurs at Asn684. Active-site charge relay system residues include Asp707 and His739.

The protein belongs to the peptidase S9B family. DPPIV subfamily. In terms of assembly, monomer. Homodimer. Heterodimer with Seprase (FAP). Requires homodimerization for optimal dipeptidyl peptidase activity and T-cell costimulation. Found in a membrane raft complex, at least composed of BCL10, CARD11, DPP4 and IKBKB. Associates with collagen. Interacts with PTPRC; the interaction is enhanced in an interleukin-12-dependent manner in activated lymphocytes. Interacts (via extracellular domain) with ADA; does not inhibit its dipeptidyl peptidase activity. Interacts with CAV1 (via the N-terminus); the interaction is direct. Interacts (via cytoplasmic tail) with CARD11 (via PDZ domain); its homodimerization is necessary for interaction with CARD11. Interacts with IGF2R; the interaction is direct. Interacts with GPC3. The soluble form (Dipeptidyl peptidase 4 soluble form also named SDPP) derives from the membrane form (Dipeptidyl peptidase 4 membrane form also named MDPP) by proteolytic processing. Post-translationally, N- and O-Glycosylated. In terms of processing, phosphorylated. Mannose 6-phosphate residues in the carbohydrate moiety are necessary for interaction with IGF2R in activated T-cells. Mannose 6-phosphorylation is induced during T-cell activation. In terms of tissue distribution, intestinal epithelium, dendritic cells and several immune system tissues.

The protein localises to the secreted. The protein resides in the cell membrane. It localises to the apical cell membrane. It is found in the cell projection. Its subcellular location is the invadopodium membrane. The protein localises to the lamellipodium membrane. The protein resides in the cell junction. It localises to the membrane raft. The catalysed reaction is Release of an N-terminal dipeptide, Xaa-Yaa-|-Zaa-, from a polypeptide, preferentially when Yaa is Pro, provided Zaa is neither Pro nor hydroxyproline.. Its activity is regulated as follows. Inhibited by GPC3 and diprotin A. Its function is as follows. Cell surface glycoprotein receptor involved in the costimulatory signal essential for T-cell receptor (TCR)-mediated T-cell activation. Acts as a positive regulator of T-cell coactivation, by binding at least ADA, CAV1, IGF2R, and PTPRC. Its binding to CAV1 and CARD11 induces T-cell proliferation and NF-kappa-B activation in a T-cell receptor/CD3-dependent manner. Its interaction with ADA also regulates lymphocyte-epithelial cell adhesion. In association with FAP is involved in the pericellular proteolysis of the extracellular matrix (ECM), the migration and invasion of endothelial cells into the ECM. May be involved in the promotion of lymphatic endothelial cells adhesion, migration and tube formation. When overexpressed, enhanced cell proliferation, a process inhibited by GPC3. Also acts as a serine exopeptidase with a dipeptidyl peptidase activity that regulates various physiological processes by cleaving peptides in the circulation, including many chemokines, mitogenic growth factors, neuropeptides and peptide hormones. Removes N-terminal dipeptides sequentially from polypeptides having unsubstituted N-termini provided that the penultimate residue is proline. This chain is Dipeptidyl peptidase 4 (DPP4), found in Bos taurus (Bovine).